A 431-amino-acid chain; its full sequence is 4-hydroxy-3-methylbut-2-en-1-yl diphosphate synthase (flavodoxin) (431 aa).

The [4Fe-4S] cluster site is built by Cys310, Cys313, Cys356, and Glu363.

This sequence belongs to the IspG family. The cofactor is [4Fe-4S] cluster.

It catalyses the reaction (2E)-4-hydroxy-3-methylbut-2-enyl diphosphate + oxidized [flavodoxin] + H2O + 2 H(+) = 2-C-methyl-D-erythritol 2,4-cyclic diphosphate + reduced [flavodoxin]. It functions in the pathway isoprenoid biosynthesis; isopentenyl diphosphate biosynthesis via DXP pathway; isopentenyl diphosphate from 1-deoxy-D-xylulose 5-phosphate: step 5/6. Converts 2C-methyl-D-erythritol 2,4-cyclodiphosphate (ME-2,4cPP) into 1-hydroxy-2-methyl-2-(E)-butenyl 4-diphosphate. The polypeptide is 4-hydroxy-3-methylbut-2-en-1-yl diphosphate synthase (flavodoxin) (Rhodopseudomonas palustris (strain HaA2)).